The following is a 100-amino-acid chain: NADH-quinone oxidoreductase subunit K 2 (100 aa).

A run of 3 helical transmembrane segments spans residues Leu-4–Leu-24, Ile-28–Ala-48, and Ile-60–Leu-80.

The protein belongs to the complex I subunit 4L family. NDH-1 is composed of 14 different subunits. Subunits NuoA, H, J, K, L, M, N constitute the membrane sector of the complex.

The protein resides in the cell inner membrane. It carries out the reaction a quinone + NADH + 5 H(+)(in) = a quinol + NAD(+) + 4 H(+)(out). Its function is as follows. NDH-1 shuttles electrons from NADH, via FMN and iron-sulfur (Fe-S) centers, to quinones in the respiratory chain. The immediate electron acceptor for the enzyme in this species is believed to be ubiquinone. Couples the redox reaction to proton translocation (for every two electrons transferred, four hydrogen ions are translocated across the cytoplasmic membrane), and thus conserves the redox energy in a proton gradient. This Sinorhizobium fredii (strain NBRC 101917 / NGR234) protein is NADH-quinone oxidoreductase subunit K 2.